A 159-amino-acid polypeptide reads, in one-letter code: Transcription antitermination protein NusB (159 aa).

Residues 1-20 (MNKNTQGKPSGKPVRRDGVD) form a disordered region.

The protein belongs to the NusB family.

Involved in transcription antitermination. Required for transcription of ribosomal RNA (rRNA) genes. Binds specifically to the boxA antiterminator sequence of the ribosomal RNA (rrn) operons. The protein is Transcription antitermination protein NusB of Stenotrophomonas maltophilia (strain R551-3).